The sequence spans 217 residues: Adenylate kinase (217 aa).

An ATP-binding site is contributed by 10–15; it reads GAGKGT. Residues 30–59 form an NMP region; it reads STGDMLRAAVKAGSPLGVKVKDIMASGQLV. AMP is bound by residues Thr-31, Arg-36, 57–59, 85–88, and Gln-92; these read QLV and GFPR. The LID stretch occupies residues 122–159; sequence GRRVHEASGRIYHVTHNPPKTEGVDDITGEPLVQRDDD. Residues Arg-123 and 132 to 133 each bind ATP; that span reads IY. Positions 156 and 167 each coordinate AMP. Residue Gly-202 participates in ATP binding.

This sequence belongs to the adenylate kinase family. In terms of assembly, monomer.

It localises to the cytoplasm. It catalyses the reaction AMP + ATP = 2 ADP. It functions in the pathway purine metabolism; AMP biosynthesis via salvage pathway; AMP from ADP: step 1/1. Catalyzes the reversible transfer of the terminal phosphate group between ATP and AMP. Plays an important role in cellular energy homeostasis and in adenine nucleotide metabolism. This chain is Adenylate kinase, found in Teredinibacter turnerae (strain ATCC 39867 / T7901).